A 430-amino-acid chain; its full sequence is Enolase (430 aa).

Q163 contributes to the (2R)-2-phosphoglycerate binding site. E205 serves as the catalytic Proton donor. 3 residues coordinate Mg(2+): D242, E286, and D313. (2R)-2-phosphoglycerate is bound by residues K338, R367, S368, and K389. The active-site Proton acceptor is the K338.

The protein belongs to the enolase family. It depends on Mg(2+) as a cofactor.

It is found in the cytoplasm. The protein localises to the secreted. Its subcellular location is the cell surface. The catalysed reaction is (2R)-2-phosphoglycerate = phosphoenolpyruvate + H2O. It functions in the pathway carbohydrate degradation; glycolysis; pyruvate from D-glyceraldehyde 3-phosphate: step 4/5. Its function is as follows. Catalyzes the reversible conversion of 2-phosphoglycerate (2-PG) into phosphoenolpyruvate (PEP). It is essential for the degradation of carbohydrates via glycolysis. The protein is Enolase of Geotalea daltonii (strain DSM 22248 / JCM 15807 / FRC-32) (Geobacter daltonii).